The sequence spans 252 residues: Imidazole glycerol phosphate synthase subunit HisF (252 aa).

Active-site residues include Asp-11 and Asp-130.

The protein belongs to the HisA/HisF family. As to quaternary structure, heterodimer of HisH and HisF.

The protein localises to the cytoplasm. The enzyme catalyses 5-[(5-phospho-1-deoxy-D-ribulos-1-ylimino)methylamino]-1-(5-phospho-beta-D-ribosyl)imidazole-4-carboxamide + L-glutamine = D-erythro-1-(imidazol-4-yl)glycerol 3-phosphate + 5-amino-1-(5-phospho-beta-D-ribosyl)imidazole-4-carboxamide + L-glutamate + H(+). Its pathway is amino-acid biosynthesis; L-histidine biosynthesis; L-histidine from 5-phospho-alpha-D-ribose 1-diphosphate: step 5/9. IGPS catalyzes the conversion of PRFAR and glutamine to IGP, AICAR and glutamate. The HisF subunit catalyzes the cyclization activity that produces IGP and AICAR from PRFAR using the ammonia provided by the HisH subunit. This is Imidazole glycerol phosphate synthase subunit HisF from Bacillus thuringiensis (strain Al Hakam).